A 379-amino-acid polypeptide reads, in one-letter code: Cytochrome b (379 aa).

Helical transmembrane passes span phenylalanine 33–methionine 53, tryptophan 77–isoleucine 98, tryptophan 113–leucine 133, and phenylalanine 178–leucine 198. 2 residues coordinate heme b: histidine 83 and histidine 97. Heme b is bound by residues histidine 182 and histidine 196. Histidine 201 contacts a ubiquinone. A run of 4 helical transmembrane segments spans residues methionine 226–tyrosine 246, leucine 288–histidine 308, leucine 320–glycine 340, and phenylalanine 347–proline 367.

Belongs to the cytochrome b family. In terms of assembly, the cytochrome bc1 complex contains 11 subunits: 3 respiratory subunits (MT-CYB, CYC1 and UQCRFS1), 2 core proteins (UQCRC1 and UQCRC2) and 6 low-molecular weight proteins (UQCRH/QCR6, UQCRB/QCR7, UQCRQ/QCR8, UQCR10/QCR9, UQCR11/QCR10 and a cleavage product of UQCRFS1). This cytochrome bc1 complex then forms a dimer. The cofactor is heme b.

It localises to the mitochondrion inner membrane. In terms of biological role, component of the ubiquinol-cytochrome c reductase complex (complex III or cytochrome b-c1 complex) that is part of the mitochondrial respiratory chain. The b-c1 complex mediates electron transfer from ubiquinol to cytochrome c. Contributes to the generation of a proton gradient across the mitochondrial membrane that is then used for ATP synthesis. The sequence is that of Cytochrome b (MT-CYB) from Massoutiera mzabi (Mzab gundi).